The following is a 376-amino-acid chain: Chaperone protein DnaJ (376 aa).

The region spanning 4 to 70 (DYYQILGVSK…QKRAAYDRFG (67 aa)) is the J domain. The CR-type zinc finger occupies 139 to 217 (GVEKNISFSS…CHGLGRYHKQ (79 aa)). Residues C152, C155, C169, C172, C191, C194, C205, and C208 each contribute to the Zn(2+) site. CXXCXGXG motif repeat units follow at residues 152–159 (CDTCHGSG), 169–176 (CDACGGVG), 191–198 (CHKCQGNG), and 205–212 (CKKCHGLG).

The protein belongs to the DnaJ family. In terms of assembly, homodimer. The cofactor is Zn(2+).

It localises to the cytoplasm. Its function is as follows. Participates actively in the response to hyperosmotic and heat shock by preventing the aggregation of stress-denatured proteins and by disaggregating proteins, also in an autonomous, DnaK-independent fashion. Unfolded proteins bind initially to DnaJ; upon interaction with the DnaJ-bound protein, DnaK hydrolyzes its bound ATP, resulting in the formation of a stable complex. GrpE releases ADP from DnaK; ATP binding to DnaK triggers the release of the substrate protein, thus completing the reaction cycle. Several rounds of ATP-dependent interactions between DnaJ, DnaK and GrpE are required for fully efficient folding. Also involved, together with DnaK and GrpE, in the DNA replication of plasmids through activation of initiation proteins. The sequence is that of Chaperone protein DnaJ from Rickettsia bellii (strain RML369-C).